The following is a 248-amino-acid chain: 14-3-3 protein zeta (248 aa).

It belongs to the 14-3-3 family. Homodimer; homodimerization is not essential for modulating the activity of Slo. Interacts with phosphorylated Slob; the interaction with Slob mediates an indirect interaction with Slo. Interacts with phosphorylated yki. Interacts with hemo; this represses 14-3-3zeta activity which prevents the 14-3-3zeta-mediated activation of phosphoinositide 3-kinase Pi3K68D. This, in turn, inhibits the Pi3K68D-mediated conversion of phosphatidylinositol to phosphatidylinositol-3-phosphate and prevents progression of early endosomes through the maturation process which regulates subsequent steps of phagocytic processing. Interacts with REPTOR (when phosphorylated), this interaction may assist the cytoplasmic retention of REPTOR. In terms of tissue distribution, predominantly expressed in the ventral nerve cord of the embryo, and in the neural tissues of the head. Also found in the region posterior to the morphogenetic furrow of the eye imaginal disk where cells differentiate as photoreceptors.

The protein resides in the cytoplasm. The protein localises to the early endosome. Functionally, required in Raf-dependent cell proliferation and photoreceptor differentiation during eye development. Acts upstream of Raf and downstream of Ras, and is essential for viability. Acts as a negative regulator of the slo calcium channel via its interaction with slo-binding protein slob. Inhibits yki activity by restricting its nuclear localization. Binds to and promotes the activity of phosphoinositide 3-kinase Pi3K68D which converts phosphatidylinositol to phosphatidylinositol-3-phosphate and promotes maturation of early endosomes. The chain is 14-3-3 protein zeta (14-3-3zeta) from Drosophila melanogaster (Fruit fly).